A 274-amino-acid chain; its full sequence is 2-dehydro-3-deoxyphosphooctonate aldolase (274 aa).

It belongs to the KdsA family.

Its subcellular location is the cytoplasm. It catalyses the reaction D-arabinose 5-phosphate + phosphoenolpyruvate + H2O = 3-deoxy-alpha-D-manno-2-octulosonate-8-phosphate + phosphate. The protein operates within carbohydrate biosynthesis; 3-deoxy-D-manno-octulosonate biosynthesis; 3-deoxy-D-manno-octulosonate from D-ribulose 5-phosphate: step 2/3. It participates in bacterial outer membrane biogenesis; lipopolysaccharide biosynthesis. This is 2-dehydro-3-deoxyphosphooctonate aldolase from Legionella pneumophila (strain Lens).